A 355-amino-acid polypeptide reads, in one-letter code: Probable butyrate kinase (355 aa).

It belongs to the acetokinase family.

The protein resides in the cytoplasm. The catalysed reaction is butanoate + ATP = butanoyl phosphate + ADP. The protein is Probable butyrate kinase of Clostridium botulinum (strain Eklund 17B / Type B).